We begin with the raw amino-acid sequence, 684 residues long: Nuclear transcription factor Y subunit gamma (684 aa).

Disordered regions lie at residues 1-74, 112-238, 414-487, and 511-650; these read MENQ…NIST, MNSP…SSFQ, HSPQ…TQQL, and QQQQ…KNDE. Low complexity predominate over residues 21–49; that stretch reads SNSHNNHHNNNNNNNYNNNNNNNINNINN. The segment covering 58–74 has biased composition (polar residues); that stretch reads KSIQQHSPHSSTPNIST. Low complexity predominate over residues 142 to 162; the sequence is HQHPSSASSSSSSSSSSLSSS. Over residues 163–176 the composition is skewed to basic residues; that stretch reads SHHHHSNHHHHHPN. Residues 188-203 are compositionally biased toward polar residues; it reads PSLNDSSSNGNGTPAL. Residues 220–238 show a composition bias toward low complexity; the sequence is TPTSTPNQRFQSNGSSSFQ. The segment covering 414–423 has biased composition (polar residues); sequence HSPQLQEQSS. The span at 424–437 shows a compositional bias: low complexity; the sequence is NNNNNNNNNNNNNN. Composition is skewed to polar residues over residues 438 to 456 and 464 to 477; these read SVSV…SPLS and SQDY…NNHN. 3 stretches are compositionally biased toward low complexity: residues 478–487, 511–522, and 529–637; these read QSSLSQTQQL, QQQQHSQQISQQ, and PSNS…NNNN.

The protein belongs to the NFYC/HAP5 subunit family. Heterotrimeric transcription factor composed of three components, NF-YA, NF-YB and NF-YC. NF-YB and NF-YC must interact and dimerize for NF-YA association and DNA binding.

The protein resides in the nucleus. Functionally, stimulates the transcription of various genes by recognizing and binding to a CCAAT motif in promoters. This is Nuclear transcription factor Y subunit gamma (nfyc-1) from Dictyostelium discoideum (Social amoeba).